Reading from the N-terminus, the 239-residue chain is NAD(P)H-quinone oxidoreductase subunit K, chloroplastic (239 aa).

[4Fe-4S] cluster is bound by residues Cys-43, Cys-44, Cys-108, and Cys-139. A disordered region spans residues 217 to 239 (KSSVSSRELGNESGKEDVSIQNK). Residues 225–239 (LGNESGKEDVSIQNK) are compositionally biased toward basic and acidic residues.

Belongs to the complex I 20 kDa subunit family. In terms of assembly, NDH is composed of at least 16 different subunits, 5 of which are encoded in the nucleus. [4Fe-4S] cluster is required as a cofactor.

The protein localises to the plastid. It is found in the chloroplast thylakoid membrane. The catalysed reaction is a plastoquinone + NADH + (n+1) H(+)(in) = a plastoquinol + NAD(+) + n H(+)(out). It carries out the reaction a plastoquinone + NADPH + (n+1) H(+)(in) = a plastoquinol + NADP(+) + n H(+)(out). Its function is as follows. NDH shuttles electrons from NAD(P)H:plastoquinone, via FMN and iron-sulfur (Fe-S) centers, to quinones in the photosynthetic chain and possibly in a chloroplast respiratory chain. The immediate electron acceptor for the enzyme in this species is believed to be plastoquinone. Couples the redox reaction to proton translocation, and thus conserves the redox energy in a proton gradient. The polypeptide is NAD(P)H-quinone oxidoreductase subunit K, chloroplastic (Acorus calamus var. americanus (American sweet flag)).